The primary structure comprises 202 residues: Holliday junction resolvase RecU (202 aa).

Mg(2+) contacts are provided by T85, D87, E100, and Q119.

Belongs to the RecU family. It depends on Mg(2+) as a cofactor.

Its subcellular location is the cytoplasm. The catalysed reaction is Endonucleolytic cleavage at a junction such as a reciprocal single-stranded crossover between two homologous DNA duplexes (Holliday junction).. Functionally, endonuclease that resolves Holliday junction intermediates in genetic recombination. Cleaves mobile four-strand junctions by introducing symmetrical nicks in paired strands. Promotes annealing of linear ssDNA with homologous dsDNA. Required for DNA repair, homologous recombination and chromosome segregation. In Streptococcus equi subsp. equi (strain 4047), this protein is Holliday junction resolvase RecU.